Reading from the N-terminus, the 138-residue chain is Large ribosomal subunit protein uL16 (138 aa).

Residues 1–16 (MLIPRRVKHRKQHHPS) are compositionally biased toward basic residues. The tract at residues 1–25 (MLIPRRVKHRKQHHPSRSGAAKGGT) is disordered.

This sequence belongs to the universal ribosomal protein uL16 family. Part of the 50S ribosomal subunit.

Functionally, binds 23S rRNA and is also seen to make contacts with the A and possibly P site tRNAs. The chain is Large ribosomal subunit protein uL16 from Rhodococcus erythropolis (strain PR4 / NBRC 100887).